Here is a 239-residue protein sequence, read N- to C-terminus: AA9 family lytic polysaccharide monooxygenase C (239 aa).

Cu(2+) is bound at residue histidine 1. The cysteines at positions 39 and 190 are disulfide-linked. Asparagine 75 is a glycosylation site (N-linked (GlcNAc...) asparagine). Histidine 84 provides a ligand contact to Cu(2+). Residue asparagine 135 is glycosylated (N-linked (GlcNAc...) asparagine). Residues histidine 157 and glutamine 166 each contribute to the O2 site. Cu(2+) is bound at residue tyrosine 168. 2 N-linked (GlcNAc...) asparagine glycosylation sites follow: asparagine 194 and asparagine 229.

Belongs to the polysaccharide monooxygenase AA9 family. The cofactor is Cu(2+).

It is found in the secreted. It catalyses the reaction [(1-&gt;4)-beta-D-glucosyl]n+m + reduced acceptor + O2 = 4-dehydro-beta-D-glucosyl-[(1-&gt;4)-beta-D-glucosyl]n-1 + [(1-&gt;4)-beta-D-glucosyl]m + acceptor + H2O.. Lytic polysaccharide monooxygenase (LPMO) that depolymerizes crystalline and amorphous polysaccharides via the oxidation of scissile alpha- or beta-(1-4)-glycosidic bonds, yielding C1 or C4 oxidation products. Catalysis by LPMOs requires the reduction of the active-site copper from Cu(II) to Cu(I) by a reducing agent and H(2)O(2) or O(2) as a cosubstrate. This Gloeophyllum trabeum (Brown rot fungus) protein is AA9 family lytic polysaccharide monooxygenase C.